The sequence spans 211 residues: Transcription antitermination protein NusB (211 aa).

It belongs to the NusB family.

Involved in transcription antitermination. Required for transcription of ribosomal RNA (rRNA) genes. Binds specifically to the boxA antiterminator sequence of the ribosomal RNA (rrn) operons. The chain is Transcription antitermination protein NusB from Trichormus variabilis (strain ATCC 29413 / PCC 7937) (Anabaena variabilis).